The sequence spans 226 residues: Orotate phosphoribosyltransferase (226 aa).

Residues Arg107, Lys108, Lys111, and 133–141 contribute to the 5-phospho-alpha-D-ribose 1-diphosphate site; that span reads EDLTTDGGS. Orotate is bound at residue Thr137.

Belongs to the purine/pyrimidine phosphoribosyltransferase family. PyrE subfamily. Homodimer. It depends on Mg(2+) as a cofactor.

The enzyme catalyses orotidine 5'-phosphate + diphosphate = orotate + 5-phospho-alpha-D-ribose 1-diphosphate. Its pathway is pyrimidine metabolism; UMP biosynthesis via de novo pathway; UMP from orotate: step 1/2. Its function is as follows. Catalyzes the transfer of a ribosyl phosphate group from 5-phosphoribose 1-diphosphate to orotate, leading to the formation of orotidine monophosphate (OMP). The sequence is that of Orotate phosphoribosyltransferase from Dinoroseobacter shibae (strain DSM 16493 / NCIMB 14021 / DFL 12).